The chain runs to 95 residues: Large ribosomal subunit protein uL23cz/uL23cy (95 aa).

This sequence belongs to the universal ribosomal protein uL23 family. Part of the 50S ribosomal subunit.

It localises to the plastid. Its subcellular location is the chloroplast. In terms of biological role, binds to 23S rRNA. The polypeptide is Large ribosomal subunit protein uL23cz/uL23cy (rpl23-A) (Amborella trichopoda).